A 272-amino-acid polypeptide reads, in one-letter code: MIGLVYSVEDPAGRGIASYIVEALKPHRTTNPYAMEYYEGDGFVLAGFNEDVIYFDFLEERLPMVSEYIVLSRHSSKAGVKSYTVHHTGNYGGEALSGGRPGELGIASPRTAWLLLRLLKTYRDAYSRNEYEVSYEATHHGPTSLSKPLVFIEIGSGLDEWRNRVNHAVVGDTVIGFLRGGIRDECIPVIGIGGGHYPRKHTELALAEPVCYGHIMAKYALEYMSRVVLDKMTERSVVKPVEVIVEKKGTRQEHRSLLEEYVSEKKLSLRYI.

This sequence belongs to the DtdA deacylase family. As to quaternary structure, monomer. Zn(2+) serves as cofactor.

The catalysed reaction is a D-aminoacyl-tRNA + H2O = a tRNA + a D-alpha-amino acid + H(+). The enzyme catalyses glycyl-tRNA(Ala) + H2O = tRNA(Ala) + glycine + H(+). Functionally, D-aminoacyl-tRNA deacylase with broad substrate specificity. By recycling D-aminoacyl-tRNA to D-amino acids and free tRNA molecules, this enzyme counteracts the toxicity associated with the formation of D-aminoacyl-tRNA entities in vivo. The chain is D-aminoacyl-tRNA deacylase from Desulfurococcus amylolyticus (strain DSM 18924 / JCM 16383 / VKM B-2413 / 1221n) (Desulfurococcus kamchatkensis).